Consider the following 423-residue polypeptide: Galactosylceramide sulfotransferase (423 aa).

At 1-12 (MTLLPKKPCKSK) the chain is on the cytoplasmic side. Residues 13 to 35 (AKGLLLGALFTSFLLLLYSYVVP) form a helical; Signal-anchor for type II membrane protein membrane-spanning segment. At 36-423 (PLYPNMAFTT…WKFLRDFLRW (388 aa)) the chain is on the lumenal side. Residues Asn66 and Asn312 are each glycosylated (N-linked (GlcNAc...) asparagine).

Belongs to the galactose-3-O-sulfotransferase family. In terms of tissue distribution, expressed in brain, testis, kidney, stomach, small intestine, liver, and lung. Not detected in heart, skeletal muscle, and spleen.

It is found in the golgi apparatus membrane. The catalysed reaction is a beta-D-galactosyl-(1&lt;-&gt;1')-N-acylsphing-4-enine + 3'-phosphoadenylyl sulfate = an N-acyl-1-beta-D-(3-O-sulfo)-galactosyl-sphing-4-enine + adenosine 3',5'-bisphosphate + H(+). It carries out the reaction a 1-O-alkyl-2-acyl-3-O-(beta-D-galactosyl)-sn-glycerol + 3'-phosphoadenylyl sulfate = a 1-O-alkyl-2-acyl-3-(beta-D-3-sulfogalactosyl)-sn-glycerol + adenosine 3',5'-bisphosphate + H(+). It catalyses the reaction a beta-D-Gal-(1&lt;-&gt;1')-ceramide + 3'-phosphoadenylyl sulfate = 1-(3-O-sulfo-beta-D-galactosyl)-ceramide + adenosine 3',5'-bisphosphate + H(+). The enzyme catalyses a 1,2-diacyl-3-O-(beta-D-galactosyl)-sn-glycerol + 3'-phosphoadenylyl sulfate = 1,2-diacyl-3-(3-O-sulfo-beta-D-galactosyl)-sn-glycerol + adenosine 3',5'-bisphosphate + H(+). The catalysed reaction is a beta-D-Gal-(1-&gt;4)-beta-D-Glc-(1&lt;-&gt;1)-Cer(d18:1(4E)) + 3'-phosphoadenylyl sulfate = beta-D-3-sulfogalactosyl-(1-&gt;4)-beta-D-glucosyl-(1&lt;-&gt;1')-N-acylsphing-4-enine + adenosine 3',5'-bisphosphate + H(+). It functions in the pathway lipid metabolism; sphingolipid metabolism. In terms of biological role, catalyzes the transfer of a sulfate group to position 3 of non-reducing beta-galactosyl residues in glycerolipids and sphingolipids, therefore participates in the biosynthesis of sulfoglycolipids. Catalyzes the synthesis of galactosylceramide sulfate (sulfatide), a major lipid component of the myelin sheath and of monogalactosylalkylacylglycerol sulfate (seminolipid), present in spermatocytes. Seems to prefer beta-glycosides at the non-reducing termini of sugar chains attached to a lipid moiety. Also acts on lactosylceramide, galactosyl 1-alkyl-2-sn-glycerol and galactosyl diacylglycerol (in vitro). The polypeptide is Galactosylceramide sulfotransferase (Mus musculus (Mouse)).